We begin with the raw amino-acid sequence, 345 residues long: Methylthioribose-1-phosphate isomerase (345 aa).

Substrate-binding positions include 44-46 (RGA), R86, and Q194. D235 functions as the Proton donor in the catalytic mechanism. Residue 245-246 (NK) participates in substrate binding.

Belongs to the eIF-2B alpha/beta/delta subunits family. MtnA subfamily.

It carries out the reaction 5-(methylsulfanyl)-alpha-D-ribose 1-phosphate = 5-(methylsulfanyl)-D-ribulose 1-phosphate. The protein operates within amino-acid biosynthesis; L-methionine biosynthesis via salvage pathway; L-methionine from S-methyl-5-thio-alpha-D-ribose 1-phosphate: step 1/6. Catalyzes the interconversion of methylthioribose-1-phosphate (MTR-1-P) into methylthioribulose-1-phosphate (MTRu-1-P). The sequence is that of Methylthioribose-1-phosphate isomerase from Desulfitobacterium hafniense (strain DSM 10664 / DCB-2).